The primary structure comprises 210 residues: MEDRQLTNADNENGRKCACGGAAPFFVGLVVALVFGWWAFPEMLYSQKEQPIRFSHKVHVNDAGMECKQCHSLREDGSFAGLPSTASCAECHSDVLGSDPEEARFVAEYVKSGKEVKWLVYQYQPDNVFFSHAAHSLDGCNQCHQFSERELCNLCHLDVADSDKAPTHYENKLTGYSKQTMKMWQCERCHANENHLGVTNSSNACFVCHK.

Residues 20–40 (GGAAPFFVGLVVALVFGWWAF) traverse the membrane as a helical segment. Heme contacts are provided by Cys-67, Cys-70, His-71, Cys-88, Cys-91, His-92, Cys-140, Cys-143, His-144, Cys-152, Cys-155, His-156, Cys-186, Cys-189, His-190, Cys-205, Cys-208, and His-209.

This sequence belongs to the multiheme cytochrome c family. In terms of assembly, the Qrc complex is composed of four subunits: QrcA, QrcB, QrcC and QrcD. Can form a supercomplex with the [NiFe] hydrogenase HynA1 and the tetraheme Type I cytochrome c3 TpIc(3), its physiological electron donors. Requires heme c as cofactor.

The protein resides in the cell inner membrane. Functionally, component of the respiratory Qrc complex, that catalyzes the reduction of the menaquinone pool using electrons transferred from the reduced periplasmic cytochrome c3, and which is probably involved in sulfate respiration. Is likely essential for growth on H(2) or formate since the periplasmic hydrogenases and/or formate dehydrogenases act as primary electron donors for the Qrc complex. This chain is Menaquinone reductase, multiheme cytochrome c subunit, found in Nitratidesulfovibrio vulgaris (strain ATCC 29579 / DSM 644 / CCUG 34227 / NCIMB 8303 / VKM B-1760 / Hildenborough) (Desulfovibrio vulgaris).